Here is a 276-residue protein sequence, read N- to C-terminus: Stathmin domain-containing protein 1 (276 aa).

Disordered stretches follow at residues 1 to 40 (MGCGPSQPAEDRRRVRAPKKGWKEEFKADVSVPHTGENCS), 61 to 106 (VQMG…RERQ), and 226 to 250 (GFEPSDLQGGKPLKRKKSKCDATLI). The N-myristoyl glycine moiety is linked to residue Gly-2. Composition is skewed to polar residues over residues 68 to 78 (GTISENSPSPS) and 87 to 100 (DLVTNGLINKPQSL). The region spanning 118-244 (QGIIQSHSKV…GKPLKRKKSK (127 aa)) is the SLD domain.

In Homo sapiens (Human), this protein is Stathmin domain-containing protein 1 (STMND1).